Reading from the N-terminus, the 387-residue chain is 1-deoxy-D-xylulose 5-phosphate reductoisomerase (387 aa).

NADPH is bound by residues Thr-10, Gly-11, Ile-13, Asn-38, and Asn-122. A 1-deoxy-D-xylulose 5-phosphate-binding site is contributed by Lys-123. Glu-124 serves as a coordination point for NADPH. Asp-148 provides a ligand contact to Mn(2+). Residues Ser-149, Glu-150, Ser-174, and His-197 each coordinate 1-deoxy-D-xylulose 5-phosphate. Residue Glu-150 participates in Mn(2+) binding. An NADPH-binding site is contributed by Gly-203. Residues Ser-210, Asn-215, Lys-216, and Glu-219 each coordinate 1-deoxy-D-xylulose 5-phosphate. Glu-219 is a Mn(2+) binding site.

It belongs to the DXR family. Requires Mg(2+) as cofactor. Mn(2+) is required as a cofactor.

It carries out the reaction 2-C-methyl-D-erythritol 4-phosphate + NADP(+) = 1-deoxy-D-xylulose 5-phosphate + NADPH + H(+). Its pathway is isoprenoid biosynthesis; isopentenyl diphosphate biosynthesis via DXP pathway; isopentenyl diphosphate from 1-deoxy-D-xylulose 5-phosphate: step 1/6. Its function is as follows. Catalyzes the NADPH-dependent rearrangement and reduction of 1-deoxy-D-xylulose-5-phosphate (DXP) to 2-C-methyl-D-erythritol 4-phosphate (MEP). The sequence is that of 1-deoxy-D-xylulose 5-phosphate reductoisomerase from Ehrlichia ruminantium (strain Gardel).